We begin with the raw amino-acid sequence, 497 residues long: Glycerol kinase (497 aa).

Residue Thr-11 participates in ADP binding. 3 residues coordinate ATP: Thr-11, Ser-12, and Ser-13. Sn-glycerol 3-phosphate is bound at residue Thr-11. Arg-15 provides a ligand contact to ADP. Residues Arg-81, Glu-82, Tyr-133, and Asp-242 each coordinate sn-glycerol 3-phosphate. Positions 81, 82, 133, 242, and 243 each coordinate glycerol. Thr-264 and Gly-307 together coordinate ADP. 4 residues coordinate ATP: Thr-264, Gly-307, Gln-311, and Gly-412. Gly-412 and Asn-416 together coordinate ADP.

The protein belongs to the FGGY kinase family.

It catalyses the reaction glycerol + ATP = sn-glycerol 3-phosphate + ADP + H(+). Its pathway is polyol metabolism; glycerol degradation via glycerol kinase pathway; sn-glycerol 3-phosphate from glycerol: step 1/1. With respect to regulation, inhibited by fructose 1,6-bisphosphate (FBP). In terms of biological role, key enzyme in the regulation of glycerol uptake and metabolism. Catalyzes the phosphorylation of glycerol to yield sn-glycerol 3-phosphate. This Leptothrix cholodnii (strain ATCC 51168 / LMG 8142 / SP-6) (Leptothrix discophora (strain SP-6)) protein is Glycerol kinase.